Reading from the N-terminus, the 299-residue chain is MTSFSAPGSPVDTVLLTSPAGAGRTEAIRIFEDLGYLCLNHVWPELVPTFLKHYAPIAPRLVLCLASRPEADAQAGLIAARVALRSLARTTVHVHLDCPEGVLLSRYALTRRPHPWFDHGKGLLAAIRAERTALEPVRALADEVVDTGPLELAQLRVHLGALVGGRPTELPVTVMSFGFKRGVPADAQFVLDIRFLPNPYYESALKPLTGLDVGVAEYVFASEQSQATYRSLLEFLRFLLHQYRQDRRSQLLIAIGCTGGQHRSVAFVERLSGDLAAEGFACRPSHRDLAVNRLQELSR.

18 to 25 (SPAGAGRT) contributes to the ATP binding site.

The protein belongs to the RapZ-like family.

In terms of biological role, displays ATPase and GTPase activities. This chain is Nucleotide-binding protein glr4163, found in Gloeobacter violaceus (strain ATCC 29082 / PCC 7421).